Reading from the N-terminus, the 760-residue chain is 5-methyltetrahydropteroyltriglutamate--homocysteine methyltransferase (760 aa).

5-methyltetrahydropteroyltri-L-glutamate-binding positions include 17–20 (RELK) and Lys-113. L-homocysteine-binding positions include 433–435 (IGS) and Glu-486. L-methionine-binding positions include 433–435 (IGS) and Glu-486. Residues 517–518 (RC) and Trp-563 each bind 5-methyltetrahydropteroyltri-L-glutamate. Residue Asp-601 coordinates L-homocysteine. Asp-601 contacts L-methionine. 5-methyltetrahydropteroyltri-L-glutamate is bound at residue Glu-607. 3 residues coordinate Zn(2+): His-643, Cys-645, and Glu-667. His-696 functions as the Proton donor in the catalytic mechanism. Cys-728 is a binding site for Zn(2+).

The protein belongs to the vitamin-B12 independent methionine synthase family. It depends on Zn(2+) as a cofactor.

The catalysed reaction is 5-methyltetrahydropteroyltri-L-glutamate + L-homocysteine = tetrahydropteroyltri-L-glutamate + L-methionine. It functions in the pathway amino-acid biosynthesis; L-methionine biosynthesis via de novo pathway; L-methionine from L-homocysteine (MetE route): step 1/1. Catalyzes the transfer of a methyl group from 5-methyltetrahydrofolate to homocysteine resulting in methionine formation. This is 5-methyltetrahydropteroyltriglutamate--homocysteine methyltransferase from Chromobacterium violaceum (strain ATCC 12472 / DSM 30191 / JCM 1249 / CCUG 213 / NBRC 12614 / NCIMB 9131 / NCTC 9757 / MK).